A 364-amino-acid chain; its full sequence is MDAKIPPLTPFKKPSGTSLLILLILLLGLLCLGFAQILDLSSISLSLLFPLAVSAICSAILGYVVVPVLRRLKAGQVIQEDGPQTHLKKAGTPTMGGIFFVPVAVIIALIWSKLDPAVLAVSIVTLAYMGIGWIDDWQILRQKSNKGLTPRMKLILQIAIAVGFCIWTFLTQSADLTNIALPGQIILPLGLFFWIIAGFVLVAESNATNLTDGVDGLAGGTGSLAFLGLAALMASNNPGLMIFCACMSGGCLGFIVHNRNPATVFMGDTGSLALGGSLGAIGILSGHVWGLFLVSGIFFVESLSVIAQVSYYKATKGPDGKGKRLLKMAPLHHHLELSGWAETQIVGLFYLINAGLAVLAVISS.

A run of 10 helical transmembrane segments spans residues 18–38 (SLLI…AQIL), 48–68 (LFPL…VVPV), 91–111 (GTPT…ALIW), 114–134 (LDPA…IGWI), 154–174 (LILQ…TQSA), 183–203 (GQII…VLVA), 214–234 (VDGL…ALMA), 237–257 (NPGL…FIVH), 280–300 (AIGI…IFFV), and 343–363 (TQIV…AVIS).

It belongs to the glycosyltransferase 4 family. MraY subfamily. Requires Mg(2+) as cofactor.

It localises to the cell inner membrane. It carries out the reaction UDP-N-acetyl-alpha-D-muramoyl-L-alanyl-gamma-D-glutamyl-meso-2,6-diaminopimeloyl-D-alanyl-D-alanine + di-trans,octa-cis-undecaprenyl phosphate = di-trans,octa-cis-undecaprenyl diphospho-N-acetyl-alpha-D-muramoyl-L-alanyl-D-glutamyl-meso-2,6-diaminopimeloyl-D-alanyl-D-alanine + UMP. The protein operates within cell wall biogenesis; peptidoglycan biosynthesis. Functionally, catalyzes the initial step of the lipid cycle reactions in the biosynthesis of the cell wall peptidoglycan: transfers peptidoglycan precursor phospho-MurNAc-pentapeptide from UDP-MurNAc-pentapeptide onto the lipid carrier undecaprenyl phosphate, yielding undecaprenyl-pyrophosphoryl-MurNAc-pentapeptide, known as lipid I. The sequence is that of Phospho-N-acetylmuramoyl-pentapeptide-transferase from Rippkaea orientalis (strain PCC 8801 / RF-1) (Cyanothece sp. (strain PCC 8801)).